We begin with the raw amino-acid sequence, 172 residues long: Methylated-DNA--protein-cysteine methyltransferase (172 aa).

Cys-142 serves as the catalytic Nucleophile; methyl group acceptor.

Belongs to the MGMT family.

It localises to the cytoplasm. It carries out the reaction a 6-O-methyl-2'-deoxyguanosine in DNA + L-cysteinyl-[protein] = S-methyl-L-cysteinyl-[protein] + a 2'-deoxyguanosine in DNA. The catalysed reaction is a 4-O-methyl-thymidine in DNA + L-cysteinyl-[protein] = a thymidine in DNA + S-methyl-L-cysteinyl-[protein]. In terms of biological role, involved in the cellular defense against the biological effects of O6-methylguanine (O6-MeG) and O4-methylthymine (O4-MeT) in DNA. Repairs the methylated nucleobase in DNA by stoichiometrically transferring the methyl group to a cysteine residue in the enzyme. This is a suicide reaction: the enzyme is irreversibly inactivated. The chain is Methylated-DNA--protein-cysteine methyltransferase from Pyrococcus horikoshii (strain ATCC 700860 / DSM 12428 / JCM 9974 / NBRC 100139 / OT-3).